Here is a 430-residue protein sequence, read N- to C-terminus: MEF2-activating motif and SAP domain-containing transcriptional regulator (430 aa).

An MEF2-binding motif is present at residues 12–28; that stretch reads IIRSKFRSVLQLRIHRR. Disordered stretches follow at residues 84 to 172, 204 to 239, 280 to 301, and 330 to 416; these read CWSL…PLPH, KSML…RFRP, VATT…APAS, and EDQV…DLSD. Residues 87–103 are compositionally biased toward basic and acidic residues; sequence LKKESPKTSQHWREPKP. Over residues 147 to 170 the composition is skewed to pro residues; it reads QPPPRMKPTPLTPSPPGVPSPSPL. The region spanning 181–215 is the SAP domain; it reads LEELTVSELRQQLRLRGLPVSGTKSMLLERMRGGA. Residues 207–228 are compositionally biased toward basic and acidic residues; the sequence is LLERMRGGAPPRERPKARREDS. Residues 224–430 form a transcription activation region; sequence RREDSAAGAP…RLWDLLEDPW (207 aa). 2 stretches are compositionally biased toward low complexity: residues 363–373 and 393–403; these read SSVFSSSLPSP and ALSGGPSLGCG.

Interacts with MEF2C.

It is found in the nucleus. Its function is as follows. Transcriptional coactivator. Stimulates the transcriptional activity of MEF2C. Stimulates MYOD1 activity in part via MEF2, resulting in an enhancement of skeletal muscle differentiation. This chain is MEF2-activating motif and SAP domain-containing transcriptional regulator (MAMSTR), found in Bos taurus (Bovine).